A 95-amino-acid polypeptide reads, in one-letter code: Protein TusB (95 aa).

Belongs to the DsrH/TusB family. In terms of assembly, heterohexamer, formed by a dimer of trimers. The hexameric TusBCD complex contains 2 copies each of TusB, TusC and TusD. The TusBCD complex interacts with TusE.

The protein localises to the cytoplasm. Part of a sulfur-relay system required for 2-thiolation of 5-methylaminomethyl-2-thiouridine (mnm(5)s(2)U) at tRNA wobble positions. The sequence is that of Protein TusB from Salmonella agona (strain SL483).